The sequence spans 150 residues: Histone H2B.2 (150 aa).

Basic and acidic residues predominate over residues 1-16; that stretch reads MAPKAEKKPAAKKPAE. Residues 1–57 form a disordered region; sequence MAPKAEKKPAAKKPAEEEPAAEKAPAGKKPKAEKRVPAGKSAGKEGGEGKRGRKKGK. An N6-acetyllysine mark is found at K7 and K34. K146 is covalently cross-linked (Glycyl lysine isopeptide (Lys-Gly) (interchain with G-Cter in ubiquitin)).

This sequence belongs to the histone H2B family. In terms of assembly, the nucleosome is a histone octamer containing two molecules each of H2A, H2B, H3 and H4 assembled in one H3-H4 heterotetramer and two H2A-H2B heterodimers. The octamer wraps approximately 147 bp of DNA. Can be acetylated to form H2BK6ac and H2BK33ac. In terms of processing, monoubiquitinated to form H2BK143ub1; may give a specific tag for epigenetic transcriptional activation.

It is found in the nucleus. The protein resides in the chromosome. In terms of biological role, core component of nucleosome. Nucleosomes wrap and compact DNA into chromatin, limiting DNA accessibility to the cellular machineries which require DNA as a template. Histones thereby play a central role in transcription regulation, DNA repair, DNA replication and chromosomal stability. DNA accessibility is regulated via a complex set of post-translational modifications of histones, also called histone code, and nucleosome remodeling. The chain is Histone H2B.2 from Zea mays (Maize).